The chain runs to 308 residues: Pyrroline-5-carboxylate reductase 3 (308 aa).

It belongs to the pyrroline-5-carboxylate reductase family. As to quaternary structure, homodecamer; composed of 5 homodimers.

The protein resides in the cytoplasm. It catalyses the reaction L-proline + NADP(+) = (S)-1-pyrroline-5-carboxylate + NADPH + 2 H(+). The enzyme catalyses L-proline + NAD(+) = (S)-1-pyrroline-5-carboxylate + NADH + 2 H(+). It functions in the pathway amino-acid biosynthesis; L-proline biosynthesis; L-proline from L-glutamate 5-semialdehyde: step 1/1. Its function is as follows. Oxidoreductase that catalyzes the last step in proline biosynthesis, which corresponds to the reduction of pyrroline-5-carboxylate (P5C) to L-proline using NAD(P)H. Proline is synthesized from either glutamate or ornithine; both are converted to P5C, and then to proline via pyrroline-5-carboxylate reductases (PYCRs). PYCR3 is exclusively linked to the biosynthesis of proline from ornithine. This chain is Pyrroline-5-carboxylate reductase 3, found in Bos taurus (Bovine).